The following is a 134-amino-acid chain: Large-conductance mechanosensitive channel (134 aa).

2 consecutive transmembrane segments (helical) span residues 16-36 (VIDL…VTAL) and 81-101 (GDFI…FIIV).

The protein belongs to the MscL family. Homopentamer.

The protein localises to the cell inner membrane. Channel that opens in response to stretch forces in the membrane lipid bilayer. May participate in the regulation of osmotic pressure changes within the cell. This chain is Large-conductance mechanosensitive channel, found in Xylella fastidiosa (strain Temecula1 / ATCC 700964).